Here is a 337-residue protein sequence, read N- to C-terminus: Phosphate acyltransferase (337 aa).

It belongs to the PlsX family. Homodimer. Probably interacts with PlsY.

The protein resides in the cytoplasm. The catalysed reaction is a fatty acyl-[ACP] + phosphate = an acyl phosphate + holo-[ACP]. The protein operates within lipid metabolism; phospholipid metabolism. Catalyzes the reversible formation of acyl-phosphate (acyl-PO(4)) from acyl-[acyl-carrier-protein] (acyl-ACP). This enzyme utilizes acyl-ACP as fatty acyl donor, but not acyl-CoA. The protein is Phosphate acyltransferase of Listeria welshimeri serovar 6b (strain ATCC 35897 / DSM 20650 / CCUG 15529 / CIP 8149 / NCTC 11857 / SLCC 5334 / V8).